A 187-amino-acid chain; its full sequence is Elongation factor P (187 aa).

This sequence belongs to the elongation factor P family.

It is found in the cytoplasm. It participates in protein biosynthesis; polypeptide chain elongation. In terms of biological role, involved in peptide bond synthesis. Stimulates efficient translation and peptide-bond synthesis on native or reconstituted 70S ribosomes in vitro. Probably functions indirectly by altering the affinity of the ribosome for aminoacyl-tRNA, thus increasing their reactivity as acceptors for peptidyl transferase. The protein is Elongation factor P of Rhodospirillum rubrum (strain ATCC 11170 / ATH 1.1.1 / DSM 467 / LMG 4362 / NCIMB 8255 / S1).